Reading from the N-terminus, the 109-residue chain is Large ribosomal subunit protein P1A (109 aa).

The span at 69–84 (APVAGGAAAPAAADGE) shows a compositional bias: low complexity. Positions 69 to 109 (APVAGGAAAPAAADGEAPAEEKEEAKEEEESDEDMGFGLFD) are disordered. Acidic residues predominate over residues 94 to 103 (KEEEESDEDM).

It belongs to the eukaryotic ribosomal protein P1/P2 family. As to quaternary structure, component of the large ribosomal subunit (LSU). Mature yeast ribosomes consist of a small (40S) and a large (60S) subunit. The 40S small subunit contains 1 molecule of ribosomal RNA (18S rRNA) and at least 33 different proteins. The large 60S subunit contains 3 rRNA molecules (25S, 5.8S and 5S rRNA) and at least 46 different proteins. The acidic ribosomal P-proteins form the stalk structure of the 60S subunit. They are organized as a pentameric complex in which uL10/P0 interacts with 2 heterodimers of P1 and P2 proteins.

It localises to the cytoplasm. Component of the ribosome, a large ribonucleoprotein complex responsible for the synthesis of proteins in the cell. The small ribosomal subunit (SSU) binds messenger RNAs (mRNAs) and translates the encoded message by selecting cognate aminoacyl-transfer RNA (tRNA) molecules. The large subunit (LSU) contains the ribosomal catalytic site termed the peptidyl transferase center (PTC), which catalyzes the formation of peptide bonds, thereby polymerizing the amino acids delivered by tRNAs into a polypeptide chain. The nascent polypeptides leave the ribosome through a tunnel in the LSU and interact with protein factors that function in enzymatic processing, targeting, and the membrane insertion of nascent chains at the exit of the ribosomal tunnel. The chain is Large ribosomal subunit protein P1A (rpp101) from Schizosaccharomyces pombe (strain 972 / ATCC 24843) (Fission yeast).